Reading from the N-terminus, the 899-residue chain is Core protein VP3 (899 aa).

Residues 1–22 (MAEPPDAATPKTSPYLKGDELS) are disordered.

It belongs to the orbivirus VP3 family.

It is found in the virion. The VP3 protein is one of the five proteins (with VP1, VP4, VP6 and VP7) which form the inner capsid of the virus. The chain is Core protein VP3 (Segment-3) from Antilocapra americana (Pronghorn).